The sequence spans 338 residues: Delta(9)-fatty-acid desaturase fat-7 (338 aa).

The next 4 membrane-spanning stretches (helical) occupy residues 51-71, 76-96, 194-214, and 218-238; these read VALF…LVFH, TAVF…AGAH, YFPL…VYFW, and AFIA…HATW.

The protein belongs to the fatty acid desaturase type 1 family. As to expression, expressed in the intestine in adult worms and in all four larval stages.

The protein resides in the membrane. The catalysed reaction is octadecanoyl-CoA + 2 Fe(II)-[cytochrome b5] + O2 + 2 H(+) = (9Z)-octadecenoyl-CoA + 2 Fe(III)-[cytochrome b5] + 2 H2O. It carries out the reaction hexadecanoyl-CoA + 2 Fe(II)-[cytochrome b5] + O2 + 2 H(+) = (9Z)-hexadecenoyl-CoA + 2 Fe(III)-[cytochrome b5] + 2 H2O. It catalyses the reaction heptadecanoyl-CoA + 2 Fe(II)-[cytochrome b5] + O2 + 2 H(+) = (9Z)-heptadecenoyl-CoA + 2 Fe(III)-[cytochrome b5] + 2 H2O. The enzyme catalyses (11E)-octadecenoyl-CoA + 2 Fe(II)-[cytochrome b5] + O2 + 2 H(+) = (9Z,11E)-octadecadienoyl-CoA + 2 Fe(III)-[cytochrome b5] + 2 H2O. It participates in lipid metabolism; monounsaturated fatty acid biosynthesis. Its pathway is lipid metabolism; fatty acid metabolism. Delta(9)-fatty acid desaturase that acts preferentially on stearoyl-CoA (octadecanoyl-CoA) producing the monounsaturated oleoyl-CoA ((9Z)-octadecenoyl-CoA), one of the most abundant monounsaturated fatty acid in Caenorhabditis elegans phospholipids and triacylglycerols. Also acts on palmitoyl-CoA (hexadecanoyl-CoA), heptadecanoyl-CoA and (11E)-octadecenoyl-CoA (trans-vaccenoyl-CoA), the monounsaturated fatty acids (MUFAs) produced are further used by several other desaturases and elongases as substrates to synthesize polyunsaturated fatty acids (PUFAs) endogenously (PUFAs are essential for membrane structure and many cellular and physiological processes). Unlike plants, Caenorhabditis elegans desaturases seem to use fatty acyl-CoAs as substrates. Partially inhibits expression of genes involved in beta-oxidation, such as ech-1 and acs-2, perhaps signaling via the actions of one of its fatty acid products. May form part of a negative feedback loop with the transcription factor nhr-49 to limit beta-oxidation, in which nhr-49 stimulates expression of fat-7 and acs-2, and in turn fat-7 indirectly inhibits acs-2 and other genes also involved in beta-oxidation. The chain is Delta(9)-fatty-acid desaturase fat-7 (fat-7) from Caenorhabditis elegans.